The primary structure comprises 320 residues: UDP-N-acetylenolpyruvoylglucosamine reductase (320 aa).

The 182-residue stretch at Arg35–His216 folds into the FAD-binding PCMH-type domain. The active site involves Arg181. Ser230 functions as the Proton donor in the catalytic mechanism. The active site involves Glu300.

Belongs to the MurB family. Requires FAD as cofactor.

It is found in the cytoplasm. The enzyme catalyses UDP-N-acetyl-alpha-D-muramate + NADP(+) = UDP-N-acetyl-3-O-(1-carboxyvinyl)-alpha-D-glucosamine + NADPH + H(+). It functions in the pathway cell wall biogenesis; peptidoglycan biosynthesis. Cell wall formation. The polypeptide is UDP-N-acetylenolpyruvoylglucosamine reductase (Brucella anthropi (strain ATCC 49188 / DSM 6882 / CCUG 24695 / JCM 21032 / LMG 3331 / NBRC 15819 / NCTC 12168 / Alc 37) (Ochrobactrum anthropi)).